The following is a 177-amino-acid chain: Nucleoside-triphosphatase THEP1 (177 aa).

Residues 10-17 and 101-108 each bind ATP; these read GKPGIGKT and CLVIDEIG.

This sequence belongs to the THEP1 NTPase family.

The enzyme catalyses a ribonucleoside 5'-triphosphate + H2O = a ribonucleoside 5'-diphosphate + phosphate + H(+). Functionally, has nucleotide phosphatase activity towards ATP, GTP, CTP, TTP and UTP. May hydrolyze nucleoside diphosphates with lower efficiency. This chain is Nucleoside-triphosphatase THEP1, found in Natranaerobius thermophilus (strain ATCC BAA-1301 / DSM 18059 / JW/NM-WN-LF).